Here is a 674-residue protein sequence, read N- to C-terminus: DNA ligase (674 aa).

NAD(+)-binding positions include aspartate 34–aspartate 38, serine 84–leucine 85, and glutamate 116. Catalysis depends on lysine 118, which acts as the N6-AMP-lysine intermediate. The NAD(+) site is built by arginine 139, glutamate 174, lysine 291, and lysine 315. Zn(2+) contacts are provided by cysteine 409, cysteine 412, cysteine 425, and cysteine 430. The 89-residue stretch at arginine 586–serine 674 folds into the BRCT domain.

This sequence belongs to the NAD-dependent DNA ligase family. LigA subfamily. The cofactor is Mg(2+). Mn(2+) serves as cofactor.

The catalysed reaction is NAD(+) + (deoxyribonucleotide)n-3'-hydroxyl + 5'-phospho-(deoxyribonucleotide)m = (deoxyribonucleotide)n+m + AMP + beta-nicotinamide D-nucleotide.. In terms of biological role, DNA ligase that catalyzes the formation of phosphodiester linkages between 5'-phosphoryl and 3'-hydroxyl groups in double-stranded DNA using NAD as a coenzyme and as the energy source for the reaction. It is essential for DNA replication and repair of damaged DNA. In Thermus scotoductus, this protein is DNA ligase.